A 382-amino-acid polypeptide reads, in one-letter code: Polyadenylate-binding protein 5 (382 aa).

RRM domains follow at residues 18–96 (AALY…WSQP), 106–182 (GNIF…RFKF), 199–276 (TNVF…RAQK), and 302–378 (VPIY…LGQA).

It localises to the cytoplasm. In terms of biological role, binds the poly(A) tail of mRNA. May be involved in cytoplasmic regulatory processes of mRNA metabolism. Can probably bind to cytoplasmic RNA sequences other than poly(A) in vivo. The sequence is that of Polyadenylate-binding protein 5 (PABPC5) from Gorilla gorilla gorilla (Western lowland gorilla).